Reading from the N-terminus, the 1021-residue chain is Receptor-like protein EIX2 (1021 aa).

The first 24 residues, 1–24 (MGKRTNPRHFLVTWSLLLLETAFG), serve as a signal peptide directing secretion. The segment at 25–109 (LTSREVNKTL…PILTGKVSPS (85 aa)) is N-cap. Residues 25-963 (LTSREVNKTL…DDDDEFSSLE (939 aa)) lie on the Extracellular side of the membrane. N-linked (GlcNAc...) asparagine glycosylation occurs at N31. LRR repeat units lie at residues 113 to 136 (LEYL…RFIG), 138 to 161 (LKRL…QFQN), 162 to 184 (LTSL…VWLS), 186 to 211 (LSSL…ITKV), 214 to 237 (LKEL…VANS), and 239 to 262 (LISL…SWLF). N-linked (GlcNAc...) asparagine glycans are attached at residues N145 and N161. The N-linked (GlcNAc...) asparagine glycan is linked to N236. N263 carries N-linked (GlcNAc...) asparagine glycosylation. 14 LRR repeats span residues 265-288 (STSL…RFGS), 290-313 (MYLE…SFGN), 314-337 (LTRL…LFLR), 342-365 (RKSL…VTRF), 366-388 (SSLK…RVGQ), 389-412 (VSSL…LALF), 413-436 (PSLR…IGKL), 437-459 (SQLR…MGQL), 461-483 (NLER…HFSN), 484-507 (LSSL…DWVP), 509-532 (FQLQ…LQTQ), 533-555 (NNYT…WFSN), 557-581 (PPEL…IVSK), and 583-607 (DYMI…NIQI). N-linked (GlcNAc...) asparagine glycosylation is present at N313. The N-linked (GlcNAc...) asparagine glycan is linked to N483. N534, N544, N564, and N593 each carry an N-linked (GlcNAc...) asparagine glycan. The LRR 21; degenerate repeat unit spans residues 608–626 (FYLHKNHFSGSISSICRNT). 6 LRR repeats span residues 627–651 (IGAA…WMNM), 652–675 (SNLA…LGSL), 677–698 (NLEA…FSQC), 699–722 (QLLQ…IGTD), 723–747 (LLQL…ICQL), and 749–773 (FLQI…NFTI). N650 and N663 each carry an N-linked (GlcNAc...) asparagine glycan. 2 N-linked (GlcNAc...) asparagine glycosylation sites follow: N770 and N778. LRR repeat units lie at residues 818–842 (LLYL…IAEM), 843–866 (RGLR…IGQM), 867–890 (KLLE…LSNL), and 892–913 (FLSV…STQL). N-linked (GlcNAc...) asparagine glycans are attached at residues N849, N856, and N889. Residues 914 to 963 (QSFDRSSYSGNAQLCGPPLEECPGYAPPIDRGSNTNPQEHDDDDEFSSLE) form a C-cap/acidic domain region. Residues 964–984 (FYVSMVLGFFVTFWGILGCLI) traverse the membrane as a helical segment. Residues 985–1021 (VNRSWRNAYFTFLTDMKSWLHMTSRVCFARLKGKLRN) are Cytoplasmic-facing.

It belongs to the RLP family. As to quaternary structure, interacts with EIX elicitor protein.

It is found in the cell membrane. Involved in plant defense. Confers resistance to the fungal pathogen T.viride through recognition of the EIX elicitor protein. The sequence is that of Receptor-like protein EIX2 from Solanum lycopersicum (Tomato).